The sequence spans 1135 residues: Envelopment polyprotein (1135 aa).

Residues 1 to 18 (MGIWKWLVMASLVWPVLT) form the signal peptide. Topologically, residues 19–485 (LRNVYDMKIE…VPGFHGWATA (467 aa)) are lumenal. Cystine bridges form between Cys-29–Cys-151, Cys-63–Cys-157, Cys-109–Cys-128, Cys-133–Cys-138, Cys-175–Cys-185, Cys-210–Cys-247, Cys-234–Cys-351, Cys-376–Cys-435, Cys-380–Cys-389, Cys-405–Cys-424, and Cys-452–Cys-475. Residue Asn-134 is glycosylated (N-linked (GlcNAc...) asparagine; by host). Asn-235 and Asn-347 each carry an N-linked (GlcNAc...) asparagine; by host glycan. The N-linked (GlcNAc...) asparagine; by host glycan is linked to Asn-399. The helical transmembrane segment at 486–506 (ALLVTFCFGWVLIPAITFIIL) threads the bilayer. Residues 507 to 627 (TILKFIANIF…LNLFRYKSRC (121 aa)) are Cytoplasmic-facing. A binding to the ribonucleoprotein region spans residues 516-533 (FHTSNQENRLKSVLRKIK). 2 CCHC-type zinc fingers span residues 545–565 (CDVC…GVSC) and 570–591 (CPYC…YKVC). Binding to the ribonucleoprotein stretches follow at residues 588-605 (YKVC…KKTV), 592-603 (QVTHRFRDDLKK), and 611-625 (TPGC…RYKS). One can recognise an ITAM domain in the interval 611–634 (TPGCYRTLNLFRYKSRCYIFTMWI). Residues 615 to 618 (YRTL) carry the YxxL motif. Residues 628-648 (YIFTMWIFLLVLESILWAASA) traverse the membrane as a helical segment. The Lumenal portion of the chain corresponds to 649–1105 (SETPLTPVWN…EWISGIFSGN (457 aa)). 8 disulfides stabilise this stretch: Cys-735/Cys-770, Cys-739/Cys-777, Cys-751/Cys-885, Cys-765/Cys-896, Cys-780/Cys-904, Cys-806/Cys-815, Cys-823/Cys-832, and Cys-863/Cys-867. The fusion loop stretch occupies residues 757–777 (YQYETSWGCNPSDCPGVGTGC). Residue Asn-928 is glycosylated (N-linked (GlcNAc...) asparagine; by host). 5 disulfide bridges follow: Cys-970/Cys-1000, Cys-993/Cys-1045, Cys-1010/Cys-1015, Cys-1046/Cys-1051, and Cys-1085/Cys-1089. A helical membrane pass occupies residues 1106 to 1126 (WIVLIVLCVFLLFSLVLLSIL). A binding to the ribonucleoprotein region spans residues 1122–1135 (LLSILCPVRKHKKS). Over 1127–1135 (CPVRKHKKS) the chain is Cytoplasmic.

This sequence belongs to the hantavirus envelope glycoprotein family. In terms of assembly, homodimer. Homotetramer; forms heterotetrameric Gn-Gc spikes in the pre-fusion conformation. Interacts (via C-terminus) with the nucleoprotein. Interacts with host TUFM; this interaction contributes to the virus-induced degradation of mitochondria by autophagy, which leads to degradation of host MAVS and inhibition of type I interferon (IFN) responses. Interacts with host MAP1LC3B; this interaction contributes to the virus-induced degradation of mitochondria by autophagy, which leads to degradation of host MAVS and inhibition of type I interferon (IFN) responses. As to quaternary structure, homodimer. Homotetramer; forms heterotetrameric Gn-Gc spikes in the pre-fusion conformation. Homotrimer; forms homotrimer in the post-fusion conformation at acidic pH. Interacts (via C-terminus) with the nucleoprotein. Post-translationally, envelope polyprotein precursor is quickly cleaved in vivo just after synthesis, presumably by host signal peptidase.

Its subcellular location is the virion membrane. It localises to the host cell surface. The protein resides in the host Golgi apparatus membrane. It is found in the host endoplasmic reticulum membrane. The protein localises to the host mitochondrion. Forms homotetramers with glycoprotein C at the surface of the virion. Attaches the virion to host cell receptors including integrin ITGAV/ITGB3. This attachment induces virion internalization predominantly through clathrin-dependent endocytosis. May also bind to host C1QBP for virus entry into the host cell. Mediates the assembly and budding of infectious virus particles through its interaction with the nucleocapsid protein and the viral genome. May dysregulate normal immune and endothelial cell responses through an ITAM motif. Translocates to mitochondria, binds to host TUFM and recruits MAP1LC3B. These interactions induce mitochondrial autophagy and therefore destruction of host MAVS leading to inhibition of type I interferon (IFN) responses. Concomitant breakdown of glycoprotein N is apparently prevented by the nucleoprotein that may inhibit Gn-stimulated autophagosome-lysosome fusion. Interacts with the viral genomic RNA. Functionally, forms homotetramers with glycoprotein N at the surface of the virion. Attaches the virion to host cell receptors including integrin ITGAV/ITGB3. This attachment induces virion internalization predominantly through clathrin-dependent endocytosis. May also bind to host C1QBP for virus entry into the host cell. Class II fusion protein that promotes fusion of viral membrane with host endosomal membrane after endocytosis of the virion. This chain is Envelopment polyprotein (GP), found in Hantaan virus (strain Lee) (Lee virus).